Here is a 1232-residue protein sequence, read N- to C-terminus: Anion exchange protein 3 (1232 aa).

Over residues 1 to 11 (MANGVIPPPGG) the composition is skewed to pro residues. Disordered regions lie at residues 1 to 316 (MANG…KLDR) and 429 to 498 (NDDK…GDGH). Topologically, residues 1-708 (MANGVIPPPG…DLRDALHSQC (708 aa)) are cytoplasmic. Basic and acidic residues predominate over residues 58 to 75 (DPEKPSRSYSERDFEFHR). Composition is skewed to basic residues over residues 76–97 (HTSH…KLRR) and 104–113 (RHTRRKRKKE). Positions 134 to 152 (VDEEEEEEEEEEGESEAEP) are enriched in acidic residues. 4 positions are modified to phosphoserine: Ser167, Ser170, Ser175, and Ser198. Over residues 200–215 (QHSSSSPSPRARASRL) the composition is skewed to low complexity. Basic and acidic residues predominate over residues 267–279 (DDMKSHRLEDNPG). Positions 280 to 289 (VRRHLVKKPS) are enriched in basic residues. At Arg295 the chain carries Omega-N-methylarginine. Basic residues predominate over residues 305–316 (LRRKKKKKKLDR). A compositionally biased stretch (polar residues) spans 440 to 450 (NPSSSSMNSVL). Positions 481-498 (HDPDAKEKPLHMPGGDGH) are enriched in basic and acidic residues. Helical transmembrane passes span 709–731 (VAAV…GLLG), 737–774 (LMGV…LLVF), 794–816 (VWVG…SFLV), 826–847 (IFAF…YKVF), and 893–910 (ALLS…AFFL). Residues 709-1232 (VAAVLFIYFA…DEYNELHMPV (524 aa)) form a membrane (anion exchange) region. Topologically, residues 911-925 (RKFRNSRFLGGKARR) are cytoplasmic. A run of 5 helical transmembrane segments spans residues 926–946 (IIGD…DYSI), 980–1002 (PFPP…LIFM), 1028–1049 (LLLI…LTAA), 1083–1128 (VTGV…IQLS), and 1155–1191 (MHLF…TVPL). Cys1165 is lipidated: S-palmitoyl cysteine.

Belongs to the anion exchanger (TC 2.A.31) family. Expressed in the heart.

The protein localises to the cell membrane. It catalyses the reaction hydrogencarbonate(in) + chloride(out) = hydrogencarbonate(out) + chloride(in). Its function is as follows. Sodium-independent anion exchanger which mediates the electroneutral exchange of chloride for bicarbonate ions across the cell membrane. May be involved in the regulation of intracellular pH, and the modulation of cardiac action potential. The chain is Anion exchange protein 3 (SLC4A3) from Homo sapiens (Human).